We begin with the raw amino-acid sequence, 188 residues long: Potassium-transporting ATPase KdpC subunit (188 aa).

The chain crosses the membrane as a helical span at residues Met13 to Ala33.

It belongs to the KdpC family. The system is composed of three essential subunits: KdpA, KdpB and KdpC.

Its subcellular location is the cell inner membrane. Functionally, part of the high-affinity ATP-driven potassium transport (or Kdp) system, which catalyzes the hydrolysis of ATP coupled with the electrogenic transport of potassium into the cytoplasm. This subunit acts as a catalytic chaperone that increases the ATP-binding affinity of the ATP-hydrolyzing subunit KdpB by the formation of a transient KdpB/KdpC/ATP ternary complex. The sequence is that of Potassium-transporting ATPase KdpC subunit from Gloeobacter violaceus (strain ATCC 29082 / PCC 7421).